An 84-amino-acid chain; its full sequence is Gas vesicle protein M1 (84 aa).

An interacts with GvpL1 region spans residues 1–25 (MEPTKDETHAIVEFVDVLLRDGAVI). Residues 5-21 (KDETHAIVEFVDVLLRD) are alpha helix 1. Beta-strand regions lie at residues 27-29 (ADV) and 41-43 (ISL). The short motif at 44 to 48 (RAAIA) is the Conserved in GvpJ1/2 but not GvpA element. Alpha helix regions lie at residues 46–56 (AIAGMTTMTEY) and 62–84 (WDAA…RRED).

Belongs to the gas vesicle GvpA family. GvpF to GvpM interact with each other in vitro, and may form multi-subunit complex(es). Might interact with GvpA1.

Its subcellular location is the gas vesicle. Proteins GvpF to GvpM might be involved in nucleating gas vesicle formation. A minor component of the gas vesicle. Gas vesicles are hollow, gas filled proteinaceous nanostructures found in several microbial planktonic microorganisms. They allow positioning of halobacteria at the optimal depth for growth in the poorly aerated, shallow brine pools of their habitat. Functionally, expression of a 9.5 kb p-vac DNA fragment containing 2 divergently transcribed regions (gvpD-gvpE-gvpF-gvpG-gvpH-gvpI-gvpJ-gvpK-gvpL-gvpM and gvpA-gvpC-gvpN-gvpO) allows H.volcanii to produce gas vesicles. All site-directed mutagenesis is tested in H.volcanii. A minimal gas vesicle can be made in H.volcanii by gvpA1-gvpO1 plus gvpF1-gvpG1-gvpJ1-gvpK1-gvpL1-gvpM1; lack of enough GvpJ1 prevents formation. A similar region restores gas vesicle production in H.halobium without the p-vac locus, but it still has the c-vac locus. The polypeptide is Gas vesicle protein M1 (gvpM11) (Halobacterium salinarum (strain ATCC 700922 / JCM 11081 / NRC-1) (Halobacterium halobium)).